The following is a 62-amino-acid chain: Photosystem II reaction center protein Z (62 aa).

The next 2 membrane-spanning stretches (helical) occupy residues 8-28 (AVFA…VVFA) and 41-61 (FSGT…NSLI).

It belongs to the PsbZ family. In terms of assembly, PSII is composed of 1 copy each of membrane proteins PsbA, PsbB, PsbC, PsbD, PsbE, PsbF, PsbH, PsbI, PsbJ, PsbK, PsbL, PsbM, PsbT, PsbY, PsbZ, Psb30/Ycf12, at least 3 peripheral proteins of the oxygen-evolving complex and a large number of cofactors. It forms dimeric complexes.

It localises to the plastid. It is found in the chloroplast thylakoid membrane. May control the interaction of photosystem II (PSII) cores with the light-harvesting antenna, regulates electron flow through the 2 photosystem reaction centers. PSII is a light-driven water plastoquinone oxidoreductase, using light energy to abstract electrons from H(2)O, generating a proton gradient subsequently used for ATP formation. This Panax ginseng (Korean ginseng) protein is Photosystem II reaction center protein Z.